Reading from the N-terminus, the 334-residue chain is Ornithine carbamoyltransferase (334 aa).

Residues Ser57–Thr60, Gln84, Arg108, and His135–Gln138 each bind carbamoyl phosphate. L-ornithine-binding positions include Asn169, Asp233, and Ser237–Met238. Carbamoyl phosphate contacts are provided by residues Cys275 to Leu276 and Arg320.

The protein belongs to the aspartate/ornithine carbamoyltransferase superfamily. OTCase family.

It localises to the cytoplasm. The enzyme catalyses carbamoyl phosphate + L-ornithine = L-citrulline + phosphate + H(+). It participates in amino-acid biosynthesis; L-arginine biosynthesis; L-arginine from L-ornithine and carbamoyl phosphate: step 1/3. In terms of biological role, reversibly catalyzes the transfer of the carbamoyl group from carbamoyl phosphate (CP) to the N(epsilon) atom of ornithine (ORN) to produce L-citrulline. The chain is Ornithine carbamoyltransferase from Vibrio campbellii (strain ATCC BAA-1116).